A 261-amino-acid polypeptide reads, in one-letter code: Phosphatidylglycerol--prolipoprotein diacylglyceryl transferase (261 aa).

The next 4 helical transmembrane spans lie at 13–33 (LQIRWYSLSYIFGMIFAYWYI), 50–70 (VISWWVISVILGGRIGYILFY), 86–106 (WNGGMSFHGALVGVMIGMYIF), and 112–132 (IDVLAAFDLGACAVPVGIFFG). R133 serves as a coordination point for a 1,2-diacyl-sn-glycero-3-phospho-(1'-sn-glycerol). 3 helical membrane-spanning segments follow: residues 169–189 (LYEAFGEGFLLFIITNSLFFF), 197–217 (GMLSSVFCIWYGVIRFFIEFV), and 232–252 (ITMGQLLSIFMIIMGFYFIKL).

The protein belongs to the Lgt family.

It is found in the cell inner membrane. The catalysed reaction is L-cysteinyl-[prolipoprotein] + a 1,2-diacyl-sn-glycero-3-phospho-(1'-sn-glycerol) = an S-1,2-diacyl-sn-glyceryl-L-cysteinyl-[prolipoprotein] + sn-glycerol 1-phosphate + H(+). It participates in protein modification; lipoprotein biosynthesis (diacylglyceryl transfer). Catalyzes the transfer of the diacylglyceryl group from phosphatidylglycerol to the sulfhydryl group of the N-terminal cysteine of a prolipoprotein, the first step in the formation of mature lipoproteins. This is Phosphatidylglycerol--prolipoprotein diacylglyceryl transferase from Ehrlichia canis (strain Jake).